We begin with the raw amino-acid sequence, 494 residues long: MDASTLFKKVKVKRVLGSLEQQIDDITTDSRTAREGSIFVASVGYTVDSHKFCQSVADQGCKLVVVNKEQSLPANVTQVVVPDTLRVASILAHTLYDYPSHQLVTFGVTGTNGKTSIATMIHLIQRKLQKNSAYLGTNGFQINETKTKGANTTPETVSLTKKIKEAVDAGAESMTLEVSSHGLVLGRLRGVEFDVAIFSNLTQDHLDFHGTMEAYGHAKSLLFSQLGEDLSKEKYVVLNNDDSFSEYLRTVTPYEVFSYGIDEEAQFMAKNIQESLQGVSFDFVTPFGTYSVKSPYVGKFNISNIMAAMIAVWSKGTSLETIIKAVENLEPVEGRLEVLDPSLPIDLIIDYAHTADGMNKLIDAVQPFVKQKLIFLVGMAGERDLTKTPEMGRVACRADYVIFTPDNPANDDPKMLTAELAKGATHQNYIEFDDRAEGIKHAIDIAEPGDTVVLASKGREPYQIMPGHIKVPHRDDLIGLEAAYKKFGGGPVGQ.

Ser-30 serves as a coordination point for UDP-N-acetyl-alpha-D-muramoyl-L-alanyl-D-glutamate. Residue 110-116 participates in ATP binding; sequence GTNGKTS. Residues 152–153, Ser-179, and Arg-187 contribute to the UDP-N-acetyl-alpha-D-muramoyl-L-alanyl-D-glutamate site; that span reads TT. Lys-219 is subject to N6-carboxylysine. The L-lysine recognition motif signature appears at 406-409; that stretch reads DNPA.

Belongs to the MurCDEF family. MurE subfamily. Carboxylation is probably crucial for Mg(2+) binding and, consequently, for the gamma-phosphate positioning of ATP.

It is found in the cytoplasm. It carries out the reaction UDP-N-acetyl-alpha-D-muramoyl-L-alanyl-D-glutamate + L-lysine + ATP = UDP-N-acetyl-alpha-D-muramoyl-L-alanyl-gamma-D-glutamyl-L-lysine + ADP + phosphate + H(+). Its pathway is cell wall biogenesis; peptidoglycan biosynthesis. Catalyzes the addition of L-lysine to the nucleotide precursor UDP-N-acetylmuramoyl-L-alanyl-D-glutamate (UMAG) in the biosynthesis of bacterial cell-wall peptidoglycan. The chain is UDP-N-acetylmuramoyl-L-alanyl-D-glutamate--L-lysine ligase from Staphylococcus aureus (strain MW2).